Here is a 346-residue protein sequence, read N- to C-terminus: UDP-3-O-acylglucosamine N-acyltransferase (346 aa).

Histidine 240 serves as the catalytic Proton acceptor.

The protein belongs to the transferase hexapeptide repeat family. LpxD subfamily. As to quaternary structure, homotrimer.

It catalyses the reaction a UDP-3-O-[(3R)-3-hydroxyacyl]-alpha-D-glucosamine + a (3R)-hydroxyacyl-[ACP] = a UDP-2-N,3-O-bis[(3R)-3-hydroxyacyl]-alpha-D-glucosamine + holo-[ACP] + H(+). It functions in the pathway bacterial outer membrane biogenesis; LPS lipid A biosynthesis. Catalyzes the N-acylation of UDP-3-O-acylglucosamine using 3-hydroxyacyl-ACP as the acyl donor. Is involved in the biosynthesis of lipid A, a phosphorylated glycolipid that anchors the lipopolysaccharide to the outer membrane of the cell. This is UDP-3-O-acylglucosamine N-acyltransferase from Phocaeicola vulgatus (strain ATCC 8482 / DSM 1447 / JCM 5826 / CCUG 4940 / NBRC 14291 / NCTC 11154) (Bacteroides vulgatus).